A 172-amino-acid chain; its full sequence is Large ribosomal subunit protein uL10 (172 aa).

Belongs to the universal ribosomal protein uL10 family. In terms of assembly, part of the ribosomal stalk of the 50S ribosomal subunit. The N-terminus interacts with L11 and the large rRNA to form the base of the stalk. The C-terminus forms an elongated spine to which L12 dimers bind in a sequential fashion forming a multimeric L10(L12)X complex.

In terms of biological role, forms part of the ribosomal stalk, playing a central role in the interaction of the ribosome with GTP-bound translation factors. This is Large ribosomal subunit protein uL10 from Francisella tularensis subsp. holarctica (strain FTNF002-00 / FTA).